Consider the following 211-residue polypeptide: WAP four-disulfide core domain protein 1 (211 aa).

The N-terminal stretch at 1–23 (MGNCGRKVLRALSFLLLLGSSSA) is a signal peptide. Positions 50-99 (RQPHADRCPPPPRTLPPGACQATRCQADSECPRHRRCCYNGCAYACLEAV) constitute a WAP domain. 4 disulfides stabilise this stretch: cysteine 57–cysteine 87, cysteine 69–cysteine 91, cysteine 74–cysteine 86, and cysteine 80–cysteine 95. Basic and acidic residues predominate over residues 182–198 (VLRQRLHKEYPEGDSKN). Positions 182–211 (VLRQRLHKEYPEGDSKNVAEPGKGQQRHFP) are disordered.

It is found in the secreted. In terms of biological role, has growth inhibitory activity. This is WAP four-disulfide core domain protein 1 (Wfdc1) from Mus musculus (Mouse).